Reading from the N-terminus, the 460-residue chain is Nucleosome assembly protein 1-like 2 (460 aa).

The span at 1–11 (MAESVDHKELS) shows a compositional bias: basic and acidic residues. Disordered regions lie at residues 1–87 (MAES…DSDR) and 213–238 (DEEE…EDPK). A compositionally biased stretch (acidic residues) spans 213–223 (DEEEEEEEDDS). The Nuclear localization signal motif lies at 346-352 (IKKKQRH).

The protein belongs to the nucleosome assembly protein (NAP) family. As to expression, brain, specifically expressed in neurons.

It localises to the nucleus. In terms of biological role, acidic protein which may be involved in interactions with other proteins or DNA. This Mus musculus (Mouse) protein is Nucleosome assembly protein 1-like 2 (Nap1l2).